A 1176-amino-acid polypeptide reads, in one-letter code: MSGFSLSEYLTKFQTTDRESYPRLQDPSRELNVIIDQLAVSPEQIDASPDSLEALIDLCHDFPHLTPKLQTQLSYLISSSLSNLSKDIKANLSSNVNFTEIGGLIPQWKRHLEEYGYLIQVLLTFLQDELHKVSSQSTNLNRSAKNSKNDSANVELFKRDCNQMENLLESITKLLEINLSKIFQTTPEKDLFIGLFTRPLFVLLEIEPVTKVSSLKMFIQRILAMCVKNHGQSSSIQSSLMTNLTYFLHLSVFNAELLKLLNDEYNYPQLTEDILKEISTRVFNAKDTTGPKAISNFLIKLSELSPGIMLRQMNLVITLLNNSSITLRCSVVEACGNIVAELAQDPQTMEHYKQQIAVLIELLEERFQDSNPYVRTKAIQGCSKICDLSSKFNKSKAKFTSLAVRSLQDRSSLVRRNSVKLLSKLLLKHPFKAIHGSQLRLSEWEEYLKGSESQLNSTLKKVESQETLNDTIERSLIEEEVEQDEGQCRTELEGSFNKSAELSRIENEVENINATNTSVLMKLKLMIVYYKDAISFIKEIHKSIELISNLLFSKNRNEVLESMDFLVLADAFDIELSEFGIKKMLHLVWMKGTNDEGTSISVHLIECYKQLFLTAPDSCNMQEKAAHIAKNLINLSIGASIADLASLEQLLGMMYEQKLIDQHVINILWAIYNSASKASMQKEQNVNNRDSEKGFSKEQIHGSIIILGMLSLADNEIALKGLESLLNIGLGAVGLKDLTLCRYSCLALERMVPKRSTIITKAINQELEDVAVKKLYAIIINYTKDNEYYPMCEQALSALFTISSKPDILATDLIREKTMMTFGKPEEEDSILSLEQSSRVVSLSQLLFIVGQVAIKTLVYLEKCEAEFKKRKIEAETRNGKVKNQGADVTNTTQDNGGDKELEMIGGTNEDDFTDAIQFVKENELLFGEKSILGKFCPIVEEIVSNSSRFSDPMLQRTATLCLEKLMCLSSKYCEKSLPLLITVMEKSPDPTIRSNAVLGLGDMAVCFNNLVDENTDYLYRRLHDENLMVQRTCLMTVTFLILAGQVKVKGQLGEMAKCLDNPDQGISDMCRLFFTELASKDNAIYNGFIDIFSNLSSDDLLGKESFKKIIKFLLTFIDKERHQKQLNEKLVGRLRKCETQKQWDDIAFVLNNLPYKNEDVTALLEQGFKVVSAKE.

Phosphoserine occurs at positions 464 and 475.

The protein belongs to the CND1 (condensin subunit 1) family. Component of the condensin complex, which contains the SMC2 and SMC4 heterodimer, and three non SMC subunits that probably regulate the complex: BRN1, YCS4 and YCG1/YCS5.

It localises to the nucleus. It is found in the chromosome. Functionally, regulatory subunit of the condensin complex, a complex required for conversion of interphase chromatin into mitotic-like condense chromosomes. The condensin complex probably introduces positive supercoils into relaxed DNA in the presence of type I topoisomerases and converts nicked DNA into positive knotted forms in the presence of type II topoisomerases. The condensin complex probably also plays a role during interphase. The chain is Condensin complex subunit 1 (YCS4) from Saccharomyces cerevisiae (strain ATCC 204508 / S288c) (Baker's yeast).